Here is a 300-residue protein sequence, read N- to C-terminus: ATP synthase gamma chain (300 aa).

It belongs to the ATPase gamma chain family. F-type ATPases have 2 components, CF(1) - the catalytic core - and CF(0) - the membrane proton channel. CF(1) has five subunits: alpha(3), beta(3), gamma(1), delta(1), epsilon(1). CF(0) has three main subunits: a, b and c.

Its subcellular location is the cell membrane. Functionally, produces ATP from ADP in the presence of a proton gradient across the membrane. The gamma chain is believed to be important in regulating ATPase activity and the flow of protons through the CF(0) complex. The chain is ATP synthase gamma chain from Acidothermus cellulolyticus (strain ATCC 43068 / DSM 8971 / 11B).